The sequence spans 178 residues: Large ribosomal subunit protein uL6 (178 aa).

Belongs to the universal ribosomal protein uL6 family. Part of the 50S ribosomal subunit.

Its function is as follows. This protein binds to the 23S rRNA, and is important in its secondary structure. It is located near the subunit interface in the base of the L7/L12 stalk, and near the tRNA binding site of the peptidyltransferase center. The polypeptide is Large ribosomal subunit protein uL6 (Desulfatibacillum aliphaticivorans).